Reading from the N-terminus, the 472-residue chain is Ribulose bisphosphate carboxylase large chain (472 aa).

Residues Asn120 and Thr170 each contribute to the substrate site. Lys172 acts as the Proton acceptor in catalysis. Lys174 contributes to the substrate binding site. Positions 198, 200, and 201 each coordinate Mg(2+). Position 198 is an N6-carboxylysine (Lys198). Residue His291 is the Proton acceptor of the active site. Positions 292, 324, and 376 each coordinate substrate.

This sequence belongs to the RuBisCO large chain family. Type I subfamily. As to quaternary structure, heterohexadecamer of 8 large chains and 8 small chains. Requires Mg(2+) as cofactor.

It localises to the carboxysome. The catalysed reaction is 2 (2R)-3-phosphoglycerate + 2 H(+) = D-ribulose 1,5-bisphosphate + CO2 + H2O. The enzyme catalyses D-ribulose 1,5-bisphosphate + O2 = 2-phosphoglycolate + (2R)-3-phosphoglycerate + 2 H(+). Functionally, ruBisCO catalyzes two reactions: the carboxylation of D-ribulose 1,5-bisphosphate, the primary event in carbon dioxide fixation, as well as the oxidative fragmentation of the pentose substrate in the photorespiration process. Both reactions occur simultaneously and in competition at the same active site. The protein is Ribulose bisphosphate carboxylase large chain of Gloeothece citriformis (strain PCC 7424) (Cyanothece sp. (strain PCC 7424)).